Reading from the N-terminus, the 985-residue chain is Ras and Rab interactor 3 (985 aa).

Positions 1 to 24 are disordered; the sequence is MIRHAGAPARGDPTGPVPVVGKGE. An SH2 domain is found at 63 to 158; it reads WLQLSLGQAE…LLPFTLRLPQ (96 aa). 3 disordered regions span residues 183–202, 251–293, and 315–531; these read SLNPPQERGKPAEPPRDRAP, QPPL…QPCS, and PPVP…KGSL. Over residues 189–201 the composition is skewed to basic and acidic residues; it reads ERGKPAEPPRDRA. 2 stretches are compositionally biased toward pro residues: residues 278-288 and 315-336; these read RRPPPPPPVLP and PPVPAPHVTPHAPGPPDHPNQP. Basic and acidic residues predominate over residues 424-442; the sequence is DTPRESTEQGQDTEVKASD. The interval 587–732 is interaction with RAB5B; the sequence is FSSMFHAFLS…TTTDLGVTTS (146 aa). In terms of domain architecture, VPS9 spans 703 to 846; that stretch reads HSKDGSLQQL…IKSYDKITVT (144 aa). In terms of domain architecture, Ras-associating spans 877–963; the sequence is QDFICVSYLE…RDFHFVYRPL (87 aa).

This sequence belongs to the RIN (Ras interaction/interference) family. In terms of assembly, interacts with CD2AP, RAB5B, RAB31 and BIN1. As to expression, widely expressed.

It is found in the cytoplasm. Its subcellular location is the cytoplasmic vesicle. The protein localises to the early endosome. Its function is as follows. Ras effector protein that functions as a guanine nucleotide exchange (GEF) for RAB5B and RAB31, by exchanging bound GDP for free GTP. Required for normal RAB31 function. The polypeptide is Ras and Rab interactor 3 (RIN3) (Homo sapiens (Human)).